Reading from the N-terminus, the 286-residue chain is 33 kDa chaperonin (286 aa).

2 disulfide bridges follow: Cys-225–Cys-227 and Cys-258–Cys-261.

The protein belongs to the HSP33 family. Under oxidizing conditions two disulfide bonds are formed involving the reactive cysteines. Under reducing conditions zinc is bound to the reactive cysteines and the protein is inactive.

Its subcellular location is the cytoplasm. In terms of biological role, redox regulated molecular chaperone. Protects both thermally unfolding and oxidatively damaged proteins from irreversible aggregation. Plays an important role in the bacterial defense system toward oxidative stress. The polypeptide is 33 kDa chaperonin (Shewanella frigidimarina (strain NCIMB 400)).